Reading from the N-terminus, the 410-residue chain is Cytochrome P450(MEG) (410 aa).

Cys355 contributes to the heme binding site.

It belongs to the cytochrome P450 family. Heme serves as cofactor.

Its subcellular location is the cytoplasm. The catalysed reaction is reduced 2[4Fe-4S]-[ferredoxin] + progesterone + O2 + 2 H(+) = 15beta-hydroxyprogesterone + oxidized 2[4Fe-4S]-[ferredoxin] + H2O. Its function is as follows. Has the capacity to hydroxylate certain steroids in the 15-beta position. Also hydroxylates progesterone in the 11-alpha and 9-beta position. This Priestia megaterium (Bacillus megaterium) protein is Cytochrome P450(MEG) (cyp106A2).